A 218-amino-acid polypeptide reads, in one-letter code: Transcription initiation factor TFIID subunit 10 (218 aa).

2 stretches are compositionally biased toward low complexity: residues 1–21 and 29–39; these read MSCS…ASAP and APAALPSSTAA. Residues 1–85 are disordered; sequence MSCSGSGADP…GAAPVSAGGA (85 aa). At Ser2 the chain carries N-acetylserine. Ser44 is modified (phosphoserine). Phosphothreonine is present on Thr48. Gly residues predominate over residues 48-62; the sequence is TAGGPGAGAAAGGTG. The [KR]-[STA]-K motif signature appears at 187–189; it reads KSK. Lys189 is subject to Allysine; alternate. Residue Lys189 is modified to N6,N6,N6-trimethyllysine; alternate.

This sequence belongs to the TAF10 family. Component of the TFIID basal transcription factor complex, composed of TATA-box-binding protein TBP, and a number of TBP-associated factors (TAFs), including TAF1, TAF2, TAF3, TAF4, TAF5, TAF6, TAF7, TAF8, TAF9, TAF10, TAF11, TAF12 and TAF13. Component of the TATA-binding protein-free TAF complex (TFTC), the PCAF histone acetylase complex and the STAGA transcription coactivator-HAT complex. The PCAF complex consists at least of TADA2L/ADA2, TADA3L/ADA3, SUPT3H, TAF5L TAF6L, TAF9, TAF10, TAF12 and TRRAP. The TFTC-HAT complex consists at least of TAF5L, TAF6L, TADA3L, SUPT3H, TAF2, TAF4, TAF5, GCN5L2/GCN5, TAF10 and TRRAP. The STAGA transcription coactivator-HAT complex consists at least of SUPT3H, GCN5L2, TAF5L, TAF6L, SUPT7L, TADA3L, TAD1L, TAF10, TAF12, TRRAP and TAF9. The STAGA core complex is associated with a subcomplex required for histone deubiquitination composed of ATXN7L3, ENY2 and USP22. Interacts with TAF3. Interacts with LOXL2. Interacts with TAF12 isoform TAFII20; the interaction is direct. Monomethylated at Lys-189 by SETD7, leading to increased affinity for RNA polymerase II. Post-translationally, lysine deamination at Lys-189 to form allysine is mediated by LOXL2. Allysine formation by LOXL2 results in release of TAF10 from promoters, leading to inhibition of TFIID-dependent transcription.

It localises to the nucleus. Its function is as follows. The TFIID basal transcription factor complex plays a major role in the initiation of RNA polymerase II (Pol II)-dependent transcription. TFIID recognizes and binds promoters with or without a TATA box via its subunit TBP, a TATA-box-binding protein, and promotes assembly of the pre-initiation complex (PIC). The TFIID complex consists of TBP and TBP-associated factors (TAFs), including TAF1, TAF2, TAF3, TAF4, TAF5, TAF6, TAF7, TAF8, TAF9, TAF10, TAF11, TAF12 and TAF13. TAF10 is also component of the PCAF histone acetylase complex, the TATA-binding protein-free TAF complex (TFTC) and the STAGA transcription coactivator-HAT complex. May regulate cyclin E expression. The chain is Transcription initiation factor TFIID subunit 10 (TAF10) from Homo sapiens (Human).